The primary structure comprises 296 residues: Putative thiosulfate sulfurtransferase SseA (296 aa).

2 Rhodanese domains span residues 31–138 (GKPG…DTSL) and 168–286 (ILGT…VPIT). Catalysis depends on cysteine 245, which acts as the Cysteine persulfide intermediate. Arginine 250 is a binding site for substrate.

The enzyme catalyses thiosulfate + hydrogen cyanide = thiocyanate + sulfite + 2 H(+). The sequence is that of Putative thiosulfate sulfurtransferase SseA (sseA) from Mycobacterium leprae (strain TN).